We begin with the raw amino-acid sequence, 107 residues long: Putative double-stranded DNA mimic protein Spro_2690 (107 aa).

Belongs to the putative dsDNA mimic protein family.

May act as a double-stranded DNA (dsDNA) mimic. Probably regulates the activity of a dsDNA-binding protein. In Serratia proteamaculans (strain 568), this protein is Putative double-stranded DNA mimic protein Spro_2690.